Here is a 166-residue protein sequence, read N- to C-terminus: MSNHDQKRDEGYIEKLVQVNRVAKTVKGGRIFTFTALTVVGDGKGRVGFGRGKSREVPAAIQKAMEAARRNMIQVDLNCTTLQYAMKSAHGASKVYMQPASEGTGIIAGGAMRAVLEVAGVQNVLAKCYGSTNPVNVVHATFKGLKGMQSPESIAAKRGKRVEEII.

An S5 DRBM domain is found at 12-75 (YIEKLVQVNR…EAARRNMIQV (64 aa)).

The protein belongs to the universal ribosomal protein uS5 family. As to quaternary structure, part of the 30S ribosomal subunit. Contacts proteins S4 and S8.

With S4 and S12 plays an important role in translational accuracy. In terms of biological role, located at the back of the 30S subunit body where it stabilizes the conformation of the head with respect to the body. The sequence is that of Small ribosomal subunit protein uS5 from Pseudomonas savastanoi pv. phaseolicola (strain 1448A / Race 6) (Pseudomonas syringae pv. phaseolicola (strain 1448A / Race 6)).